The sequence spans 75 residues: MTVIRLTRMGRTKRPFYRIVVTDSRKRRDGGWIESIGYYNPMVEPEVIKVDAERLAYWKSVGAKLSDKVASITSK.

Belongs to the bacterial ribosomal protein bS16 family.

In Campylobacter jejuni subsp. jejuni serotype O:23/36 (strain 81-176), this protein is Small ribosomal subunit protein bS16.